Here is a 377-residue protein sequence, read N- to C-terminus: Succinyl-diaminopimelate desuccinylase (377 aa).

Histidine 66 contacts Zn(2+). Aspartate 68 is a catalytic residue. Zn(2+) is bound at residue aspartate 99. The Proton acceptor role is filled by glutamate 133. The Zn(2+) site is built by glutamate 134, glutamate 162, and histidine 348.

It belongs to the peptidase M20A family. DapE subfamily. In terms of assembly, homodimer. Zn(2+) serves as cofactor. The cofactor is Co(2+).

It carries out the reaction N-succinyl-(2S,6S)-2,6-diaminopimelate + H2O = (2S,6S)-2,6-diaminopimelate + succinate. The protein operates within amino-acid biosynthesis; L-lysine biosynthesis via DAP pathway; LL-2,6-diaminopimelate from (S)-tetrahydrodipicolinate (succinylase route): step 3/3. In terms of biological role, catalyzes the hydrolysis of N-succinyl-L,L-diaminopimelic acid (SDAP), forming succinate and LL-2,6-diaminopimelate (DAP), an intermediate involved in the bacterial biosynthesis of lysine and meso-diaminopimelic acid, an essential component of bacterial cell walls. This is Succinyl-diaminopimelate desuccinylase from Methylococcus capsulatus (strain ATCC 33009 / NCIMB 11132 / Bath).